Here is a 64-residue protein sequence, read N- to C-terminus: Kappa-lycotoxin-Os1a (64 aa).

Intrachain disulfides connect Cys-10–Cys-26, Cys-17–Cys-56, Cys-19–Cys-42, and Cys-28–Cys-40.

This sequence belongs to the neurotoxin 04 (omega-agtx) family. 01 (type I omega-agtx) subfamily. As to expression, expressed by the venom gland.

It localises to the secreted. Functionally, insecticidal to house crickets. It induces an excitatory slow-onset impact that leads to irreversible spastic paralysis. It also modifies human voltage-gated potassium channel Kv1.5/KCNA5. Most likely, it binds to the voltage-sensing domain of the channel, suggesting it does not block the pore but prevents its opening at physiological membrane potentials. The recombinant peptide binds to the channel in an irreversible manner and slows down the hKv1.5 current activation kinetics. It is not toxic to mice, when intracranially injected (at 0.5 ug/g mouse). The polypeptide is Kappa-lycotoxin-Os1a (Oculicosa supermirabilis (Central Asian wolf-spider)).